Reading from the N-terminus, the 104-residue chain is MIRKATVMKVYKDKYDDYKQRHDKLWPEMAEMLKAHGVHHYSIFLLEETGQLFAYLLVEDEDSFSEVAKTEICQKWWAYMAPLMETNDDLSPVSHDLKEVFYLA.

Residue tyrosine 18 coordinates substrate. The active-site Proton donor is histidine 22. Residues tyrosine 41 and 76 to 77 contribute to the substrate site; that span reads WW.

The protein belongs to the rhamnose mutarotase family. In terms of assembly, homodimer.

It localises to the cytoplasm. The catalysed reaction is alpha-L-rhamnose = beta-L-rhamnose. It functions in the pathway carbohydrate metabolism; L-rhamnose metabolism. In terms of biological role, involved in the anomeric conversion of L-rhamnose. This chain is L-rhamnose mutarotase, found in Shouchella clausii (strain KSM-K16) (Alkalihalobacillus clausii).